Reading from the N-terminus, the 285-residue chain is Acetyl-coenzyme A carboxylase carboxyl transferase subunit beta 2 (285 aa).

The disordered stretch occupies residues 1–20 (MAIRSLFSGNRKKKEDGQEK). The CoA carboxyltransferase N-terminal domain maps to 26-285 (LMTKCPECRH…MHTKGGVQHV (260 aa)). 4 residues coordinate Zn(2+): cysteine 30, cysteine 33, cysteine 49, and cysteine 52. Residues 30 to 52 (CPECRHIQLTKELEKNHKVCTKC) form a C4-type zinc finger.

Belongs to the AccD/PCCB family. Acetyl-CoA carboxylase is a heterohexamer composed of biotin carboxyl carrier protein (AccB), biotin carboxylase (AccC) and two subunits each of ACCase subunit alpha (AccA) and ACCase subunit beta (AccD). Zn(2+) serves as cofactor.

It localises to the cytoplasm. The enzyme catalyses N(6)-carboxybiotinyl-L-lysyl-[protein] + acetyl-CoA = N(6)-biotinyl-L-lysyl-[protein] + malonyl-CoA. The protein operates within lipid metabolism; malonyl-CoA biosynthesis; malonyl-CoA from acetyl-CoA: step 1/1. Functionally, component of the acetyl coenzyme A carboxylase (ACC) complex. Biotin carboxylase (BC) catalyzes the carboxylation of biotin on its carrier protein (BCCP) and then the CO(2) group is transferred by the transcarboxylase to acetyl-CoA to form malonyl-CoA. This chain is Acetyl-coenzyme A carboxylase carboxyl transferase subunit beta 2, found in Lysinibacillus sphaericus (strain C3-41).